The sequence spans 418 residues: uncharacterized protein (418 aa).

Transmembrane regions (helical) follow at residues 51 to 71 (FVMA…GALV), 79 to 99 (ALVV…PLFA), 110 to 130 (VTGI…LGAV), 163 to 183 (FFGP…SVLA), 224 to 244 (VIFG…LPLV), 258 to 278 (ALMS…AYVV), 289 to 309 (PIFL…TLSD), 315 to 335 (VGVQ…FPLV), 356 to 376 (ATGI…VVAG), and 379 to 399 (AAFM…LVAM).

Belongs to the major facilitator superfamily.

The protein resides in the cell membrane. This is an uncharacterized protein from Mycobacterium tuberculosis (strain CDC 1551 / Oshkosh).